The following is a 241-amino-acid chain: Orotidine 5'-phosphate decarboxylase (241 aa).

Substrate is bound by residues aspartate 19, lysine 41, 69 to 78 (DLKFFDIPAT), threonine 124, arginine 185, glutamine 194, glycine 214, and arginine 215. Lysine 71 functions as the Proton donor in the catalytic mechanism.

The protein belongs to the OMP decarboxylase family. Type 1 subfamily. Homodimer.

The catalysed reaction is orotidine 5'-phosphate + H(+) = UMP + CO2. It participates in pyrimidine metabolism; UMP biosynthesis via de novo pathway; UMP from orotate: step 2/2. Functionally, catalyzes the decarboxylation of orotidine 5'-monophosphate (OMP) to uridine 5'-monophosphate (UMP). The polypeptide is Orotidine 5'-phosphate decarboxylase (Stenotrophomonas maltophilia (strain K279a)).